The sequence spans 604 residues: Proline--tRNA ligase (604 aa).

This sequence belongs to the class-II aminoacyl-tRNA synthetase family. ProS type 1 subfamily. As to quaternary structure, homodimer.

It is found in the cytoplasm. The enzyme catalyses tRNA(Pro) + L-proline + ATP = L-prolyl-tRNA(Pro) + AMP + diphosphate. Catalyzes the attachment of proline to tRNA(Pro) in a two-step reaction: proline is first activated by ATP to form Pro-AMP and then transferred to the acceptor end of tRNA(Pro). As ProRS can inadvertently accommodate and process non-cognate amino acids such as alanine and cysteine, to avoid such errors it has two additional distinct editing activities against alanine. One activity is designated as 'pretransfer' editing and involves the tRNA(Pro)-independent hydrolysis of activated Ala-AMP. The other activity is designated 'posttransfer' editing and involves deacylation of mischarged Ala-tRNA(Pro). The misacylated Cys-tRNA(Pro) is not edited by ProRS. This Trichormus variabilis (strain ATCC 29413 / PCC 7937) (Anabaena variabilis) protein is Proline--tRNA ligase.